Reading from the N-terminus, the 735-residue chain is Disintegrin and metalloproteinase domain-containing protein 2 (735 aa).

The signal sequence occupies residues 1 to 15; it reads MLCLLLLLCGLASLG. The propeptide occupies 16 to 176; sequence GPLKKYVENS…KIKSIKSSVR (161 aa). At 16 to 680 the chain is on the extracellular side; it reads GPLKKYVENS…EGAYHTKSRK (665 aa). N-linked (GlcNAc...) asparagine glycans are attached at residues asparagine 55, asparagine 220, and asparagine 288. Residues 178–375 enclose the Peptidase M12B domain; that stretch reads HYIEMHIIVE…QVSQCLQNQP (198 aa). 4 disulfide bridges follow: cysteine 287–cysteine 370, cysteine 329–cysteine 354, cysteine 331–cysteine 336, and cysteine 442–cysteine 455. N-linked (GlcNAc...) asparagine glycosylation occurs at asparagine 353. One can recognise a Disintegrin domain in the interval 384 to 470; it reads NPVCGNNRVE…ACQEDLYVIN (87 aa). N-linked (GlcNAc...) asparagine glycans are attached at residues asparagine 456 and asparagine 564. Residues 610 to 643 enclose the EGF-like domain; the sequence is LGYDCTPATCSDHGVCNNKRHCHCNPTYVPPNCE. 3 disulfide bridges follow: cysteine 614–cysteine 625, cysteine 619–cysteine 631, and cysteine 633–cysteine 642. A helical membrane pass occupies residues 681–701; it reads WPFFLIIPFFVIFSVLVATVV. The Cytoplasmic portion of the chain corresponds to 702 to 735; sequence KVYYQKKKWKTEDYANDENIESESEPKSSKVSSK. Positions 716–735 are disordered; it reads ANDENIESESEPKSSKVSSK. The residue at position 723 (serine 723) is a Phosphoserine.

As to quaternary structure, heterodimer with ADAM1/fertilin subunit alpha. Post-translationally, the signal and the metalloprotease domain are cleaved during the epididymal maturation of the spermatozoa. In terms of tissue distribution, expressed specifically in testis.

The protein resides in the membrane. In terms of biological role, sperm surface membrane protein that may be involved in sperm-egg plasma membrane adhesion and fusion during fertilization. Could have a direct role in sperm-zona binding or migration of sperm from the uterus into the oviduct. Interactions with egg membrane could be mediated via binding between its disintegrin-like domain to one or more integrins receptors on the egg. This is a non catalytic metalloprotease-like protein. The protein is Disintegrin and metalloproteinase domain-containing protein 2 (ADAM2) of Cavia porcellus (Guinea pig).